The chain runs to 365 residues: Leu/Ile/Val/Thr-binding protein (365 aa).

The N-terminal stretch at 1-21 (MKGKTLLAGCIALSLSHMAFA) is a signal peptide. A disulfide bridge links C74 with C99.

This sequence belongs to the leucine-binding protein family.

The protein localises to the periplasm. Its function is as follows. This protein is a component of the leucine, isoleucine, valine, threonine transport system, which is one of the two periplasmic binding protein-dependent transport systems of the high-affinity transport of the branched-chain amino acids. This Salmonella typhimurium (strain LT2 / SGSC1412 / ATCC 700720) protein is Leu/Ile/Val/Thr-binding protein (livJ).